We begin with the raw amino-acid sequence, 1111 residues long: RecBCD enzyme subunit RecC (1111 aa).

The protein belongs to the RecC family. As to quaternary structure, heterotrimer of RecB, RecC and RecD. All subunits contribute to DNA-binding.

In terms of biological role, a helicase/nuclease that prepares dsDNA breaks (DSB) for recombinational DNA repair. Binds to DSBs and unwinds DNA via a highly rapid and processive ATP-dependent bidirectional helicase activity. Unwinds dsDNA until it encounters a Chi (crossover hotspot instigator) sequence from the 3' direction. Cuts ssDNA a few nucleotides 3' to the Chi site. The properties and activities of the enzyme are changed at Chi. The Chi-altered holoenzyme produces a long 3'-ssDNA overhang and facilitates RecA-binding to the ssDNA for homologous DNA recombination and repair. Holoenzyme degrades any linearized DNA that is unable to undergo homologous recombination. In the holoenzyme this subunit recognizes the wild-type Chi sequence, and when added to isolated RecB increases its ATP-dependent helicase processivity. In Buchnera aphidicola subsp. Baizongia pistaciae (strain Bp), this protein is RecBCD enzyme subunit RecC.